A 3174-amino-acid polypeptide reads, in one-letter code: Intermembrane lipid transfer protein VPS13A (3174 aa).

Residues 3–116 (FESVVVDVLN…LMEAKQQELK (114 aa)) enclose the Chorein N-terminal domain. TPR repeat units follow at residues 212 to 245 (LFAY…ENIV), 373 to 406 (LTSK…QTAE), and 537 to 575 (IDSF…NPLD). Ser839 carries the post-translational modification Phosphoserine. Residues 842–848 (EFFDAPC) carry the FFAT motif. 2 TPR repeats span residues 1256–1289 (VIDL…LLPL) and 1291–1320 (LEVV…KPME). Phosphoserine is present on Ser1416. The TPR 6 repeat unit spans residues 2009–2041 (YEGDTLLGTASPENEFNIPLGSYRSFIFLKPED). The SHR-BD domain occupies 2209 to 2454 (VAFHSPYWMV…VFYTWADPVG (246 aa)). 3 TPR repeats span residues 2568-2601 (PMSV…DTNV), 2717-2751 (LGFI…FKEE), and 2860-2898 (ILGL…PEEF). The interval 2751-3174 (EYKTASLVDQ…QEAREPSPSL (424 aa)) is required for mitochondrial localization. The required for lipid droplet localization stretch occupies residues 2953-3027 (PAGFREGITR…SSTFQGIKRA (75 aa)). The stretch at 3086-3119 (MLMITRRGVLFVTKGTFGQLTCEWQYSFDEFTKE) is one TPR 10 repeat.

The protein belongs to the VPS13 family. As to quaternary structure, interacts (via FFAT motif) with VAPA and VAPB. Interacts with RAB7A. Interacts with XK. As to expression, expressed in red blood cells (at protein level). Widely expressed, with high expression in brain, heart, skeletal muscle and kidney.

The protein resides in the mitochondrion outer membrane. The protein localises to the endoplasmic reticulum membrane. It localises to the endosome membrane. Its subcellular location is the lysosome membrane. It is found in the lipid droplet. The protein resides in the golgi apparatus. The protein localises to the cytoplasmic vesicle. It localises to the secretory vesicle. Its subcellular location is the neuronal dense core vesicle. Functionally, mediates the transfer of lipids between membranes at organelle contact sites. Binds phospholipids. Required for the formation or stabilization of ER-mitochondria contact sites which enable transfer of lipids between the ER and mitochondria. Negatively regulates lipid droplet size and motility. Required for efficient lysosomal protein degradation. The protein is Intermembrane lipid transfer protein VPS13A (VPS13A) of Homo sapiens (Human).